The following is a 280-amino-acid chain: Small ribosomal subunit protein uS2 (280 aa).

The protein belongs to the universal ribosomal protein uS2 family.

The polypeptide is Small ribosomal subunit protein uS2 (Desulforapulum autotrophicum (strain ATCC 43914 / DSM 3382 / VKM B-1955 / HRM2) (Desulfobacterium autotrophicum)).